The primary structure comprises 379 residues: Queuine tRNA-ribosyltransferase (379 aa).

The active-site Proton acceptor is the Asp-93. Substrate contacts are provided by residues 93–97 (DSGGF), Asp-147, Gln-191, and Gly-218. Residues 249–255 (GVGKPED) are RNA binding. The Nucleophile role is filled by Asp-268. The tract at residues 273–277 (TRNAR) is RNA binding; important for wobble base 34 recognition. Cys-306, Cys-308, Cys-311, and His-337 together coordinate Zn(2+).

This sequence belongs to the queuine tRNA-ribosyltransferase family. In terms of assembly, homodimer. Within each dimer, one monomer is responsible for RNA recognition and catalysis, while the other monomer binds to the replacement base PreQ1. Zn(2+) is required as a cofactor.

It carries out the reaction 7-aminomethyl-7-carbaguanine + guanosine(34) in tRNA = 7-aminomethyl-7-carbaguanosine(34) in tRNA + guanine. Its pathway is tRNA modification; tRNA-queuosine biosynthesis. Catalyzes the base-exchange of a guanine (G) residue with the queuine precursor 7-aminomethyl-7-deazaguanine (PreQ1) at position 34 (anticodon wobble position) in tRNAs with GU(N) anticodons (tRNA-Asp, -Asn, -His and -Tyr). Catalysis occurs through a double-displacement mechanism. The nucleophile active site attacks the C1' of nucleotide 34 to detach the guanine base from the RNA, forming a covalent enzyme-RNA intermediate. The proton acceptor active site deprotonates the incoming PreQ1, allowing a nucleophilic attack on the C1' of the ribose to form the product. After dissociation, two additional enzymatic reactions on the tRNA convert PreQ1 to queuine (Q), resulting in the hypermodified nucleoside queuosine (7-(((4,5-cis-dihydroxy-2-cyclopenten-1-yl)amino)methyl)-7-deazaguanosine). The chain is Queuine tRNA-ribosyltransferase from Actinobacillus succinogenes (strain ATCC 55618 / DSM 22257 / CCUG 43843 / 130Z).